Consider the following 601-residue polypeptide: Serine/threonine-protein phosphatase 2A 65 kDa regulatory subunit A beta isoform (601 aa).

The residue at position 2 (Ala-2) is an N-acetylalanine. 15 HEAT repeats span residues 20–58 (DSLY…GVER), 59–96 (TRTE…GGPD), 97–135 (FAHC…TPVA), 136–173 (LEAH…ASNA), 174–212 (VKAE…ELDS), 213–251 (VKTE…SQDD), 252–290 (LEAL…GPKI), 291–333 (ALSD…RETV), 334–372 (IMNQ…GKEN), 373–411 (TIEH…GIRQ), 412–450 (LSQS…GVEF), 451–489 (FDEK…GTEW), 490–528 (AQNT…GKEI), 529–567 (TTKQ…DTNA), and 568–601 (LQGE…LALA).

This sequence belongs to the phosphatase 2A regulatory subunit A family. PP2A consists of a common heterodimeric core enzyme, composed of a 36 kDa catalytic subunit (subunit C) and a 65 kDa constant regulatory subunit (PR65 or subunit A), that associates with a variety of regulatory subunits. Proteins that associate with the core dimer include three families of regulatory subunits B (the R2/B/PR55/B55, R3/B''/PR72/PR130/PR59 and R5/B'/B56 families), the 48 kDa variable regulatory subunit, viral proteins, and cell signaling molecules. Interacts with IPO9. Interacts with SGO1. Interacts with RAF1.

Functionally, the PR65 subunit of protein phosphatase 2A serves as a scaffolding molecule to coordinate the assembly of the catalytic subunit and a variable regulatory B subunit. The chain is Serine/threonine-protein phosphatase 2A 65 kDa regulatory subunit A beta isoform (Ppp2r1b) from Rattus norvegicus (Rat).